The sequence spans 330 residues: D-lactate dehydrogenase (330 aa).

Residues 156–157, Asp176, 206–207, 233–235, and Asp259 each bind NAD(+); these read RI, VP, and AAR. Residue Arg235 is part of the active site. Glu264 is an active-site residue. His296 (proton donor) is an active-site residue.

This sequence belongs to the D-isomer specific 2-hydroxyacid dehydrogenase family.

It catalyses the reaction (R)-lactate + NAD(+) = pyruvate + NADH + H(+). The polypeptide is D-lactate dehydrogenase (ldhD) (Staphylococcus aureus (strain Mu50 / ATCC 700699)).